An 828-amino-acid chain; its full sequence is Periplasmic nitrate reductase (828 aa).

The segment at residues 1–32 (MNLSRRDFMKANAAMAAATAAGLSIPVKNVEA) is a signal peptide (tat-type signal). The region spanning 37 to 93 (IKWDKAVCRFCGTGCAVLVGTKDGRVVASQGDPDAEVNRGLNCIKGYFLPKIMYGKD) is the 4Fe-4S Mo/W bis-MGD-type domain. [4Fe-4S] cluster is bound by residues Cys44, Cys47, Cys51, and Cys79. Mo-bis(molybdopterin guanine dinucleotide) is bound by residues Lys81, Gln148, Asn173, Cys177, 210-217 (WGSNMAEM), 241-245 (STFEH), Met371, Gln375, Asn481, 507-508 (SD), Lys530, Asp557, and 717-726 (TGRVLEHWHT). Phe793 lines the substrate pocket. 2 residues coordinate Mo-bis(molybdopterin guanine dinucleotide): Asn801 and Lys818.

This sequence belongs to the prokaryotic molybdopterin-containing oxidoreductase family. NasA/NapA/NarB subfamily. Component of the periplasmic nitrate reductase NapAB complex composed of NapA and NapB. The cofactor is [4Fe-4S] cluster. Requires Mo-bis(molybdopterin guanine dinucleotide) as cofactor. Post-translationally, predicted to be exported by the Tat system. The position of the signal peptide cleavage has not been experimentally proven.

Its subcellular location is the periplasm. It carries out the reaction 2 Fe(II)-[cytochrome] + nitrate + 2 H(+) = 2 Fe(III)-[cytochrome] + nitrite + H2O. Functionally, catalytic subunit of the periplasmic nitrate reductase complex NapAB. Receives electrons from NapB and catalyzes the reduction of nitrate to nitrite. The sequence is that of Periplasmic nitrate reductase from Aggregatibacter actinomycetemcomitans (Actinobacillus actinomycetemcomitans).